The following is a 551-amino-acid chain: Glucans biosynthesis protein D (551 aa).

The tat-type signal signal peptide spans M1–A32.

The protein belongs to the OpgD/OpgG family. Post-translationally, predicted to be exported by the Tat system. The position of the signal peptide cleavage has not been experimentally proven.

The protein localises to the periplasm. It functions in the pathway glycan metabolism; osmoregulated periplasmic glucan (OPG) biosynthesis. Its function is as follows. Probably involved in the control of the structural glucose backbone of osmoregulated periplasmic glucans (OPGs). The polypeptide is Glucans biosynthesis protein D (Escherichia coli O9:H4 (strain HS)).